The sequence spans 529 residues: 3-ketoacyl-CoA synthase 20 (529 aa).

The interval 1-22 (MSHNQNQPHRPVPVHVTNAEPN) is disordered. Helical transmembrane passes span 52–72 (LYILLLPLLAATIANLSSFTI) and 84–104 (FHFLSATLATALLISLSTAYF). The FAE domain maps to 103–396 (YFTTRPRRVF…FFATLVARKV (294 aa)). Catalysis depends on residues cysteine 247, histidine 326, histidine 415, histidine 419, and asparagine 452.

The protein belongs to the thiolase-like superfamily. Chalcone/stilbene synthases family. As to expression, expressed in aerial organs. Expressed in leaves, flowers, siliques and stems. Expressed in roots, young seedlings, leaves, flowers and siliques.

Its subcellular location is the membrane. It carries out the reaction a very-long-chain acyl-CoA + malonyl-CoA + H(+) = a very-long-chain 3-oxoacyl-CoA + CO2 + CoA. It functions in the pathway lipid metabolism; fatty acid biosynthesis. Its activity is regulated as follows. Inhibited by K3 herbicides such as alachlor, allidochlor, anilofos, cafenstrole, fentrazamide and flufenacet. Strongly inhibited by metazachlor and only slightly by mefluidide. In terms of biological role, mediates the synthesis of VLCFAs from 22 to 26 carbons in length (e.g. C22, C24, C26). Functionally redundant with KCS2 in the two-carbon elongation of C22 fatty acids that is required for cuticular wax and root suberin biosynthesis. This chain is 3-ketoacyl-CoA synthase 20, found in Arabidopsis thaliana (Mouse-ear cress).